Reading from the N-terminus, the 25-residue chain is Oxyopinin-3c (25 aa).

Expressed by the venom gland.

The protein localises to the secreted. May have cytolytic and antimicrobial activity. The chain is Oxyopinin-3c from Oxyopes takobius (Lynx spider).